The chain runs to 143 residues: Nucleoside diphosphate kinase (143 aa).

6 residues coordinate ATP: lysine 11, phenylalanine 59, arginine 87, threonine 93, arginine 104, and asparagine 114. The active-site Pros-phosphohistidine intermediate is the histidine 117.

It belongs to the NDK family. Homotetramer. It depends on Mg(2+) as a cofactor.

The protein resides in the cytoplasm. It catalyses the reaction a 2'-deoxyribonucleoside 5'-diphosphate + ATP = a 2'-deoxyribonucleoside 5'-triphosphate + ADP. The catalysed reaction is a ribonucleoside 5'-diphosphate + ATP = a ribonucleoside 5'-triphosphate + ADP. Its function is as follows. Major role in the synthesis of nucleoside triphosphates other than ATP. The ATP gamma phosphate is transferred to the NDP beta phosphate via a ping-pong mechanism, using a phosphorylated active-site intermediate. The chain is Nucleoside diphosphate kinase from Tolumonas auensis (strain DSM 9187 / NBRC 110442 / TA 4).